A 1113-amino-acid polypeptide reads, in one-letter code: Translation initiation factor IF-2 (1113 aa).

Composition is skewed to polar residues over residues 56–72, 129–139, 162–187, and 194–205; these read QSNQSINNKTKQNSSKE, KANTSNQSKGV, LENNASKQNIEDNNNFQERSPRTQLV, and TKNNEPPQQKTS. 2 disordered regions span residues 56-446 and 470-504; these read QSNQ…IGEN and LARPAKPKSTKKSNSKATVVTRKRKKESTRQRQRR. Positions 248–265 are enriched in low complexity; it reads PVQPRTQNNQNRQRIPNK. Residues 415 to 429 are compositionally biased toward basic and acidic residues; the sequence is RRSDWDDAAKLEALR. Composition is skewed to basic residues over residues 474-483 and 490-504; these read AKPKSTKKSN and TRKRKKESTRQRQRR. Residues 605–777 enclose the tr-type G domain; it reads RRPPVVTVMG…VLLVTEVEDL (173 aa). The tract at residues 614–621 is G1; that stretch reads GHVDHGKT. Residue 614-621 coordinates GTP; it reads GHVDHGKT. Residues 639–643 are G2; the sequence is GITQH. The segment at 664–667 is G3; it reads DTPG. GTP is bound by residues 664–668 and 718–721; these read DTPGH and NKID. Residues 718–721 form a G4 region; the sequence is NKID. The G5 stretch occupies residues 754–756; sequence SAI.

This sequence belongs to the TRAFAC class translation factor GTPase superfamily. Classic translation factor GTPase family. IF-2 subfamily.

It is found in the cytoplasm. In terms of biological role, one of the essential components for the initiation of protein synthesis. Protects formylmethionyl-tRNA from spontaneous hydrolysis and promotes its binding to the 30S ribosomal subunits. Also involved in the hydrolysis of GTP during the formation of the 70S ribosomal complex. This is Translation initiation factor IF-2 from Prochlorococcus marinus (strain MIT 9211).